The primary structure comprises 187 residues: Elongation factor P (187 aa).

It belongs to the elongation factor P family.

It localises to the cytoplasm. It functions in the pathway protein biosynthesis; polypeptide chain elongation. Functionally, involved in peptide bond synthesis. Stimulates efficient translation and peptide-bond synthesis on native or reconstituted 70S ribosomes in vitro. Probably functions indirectly by altering the affinity of the ribosome for aminoacyl-tRNA, thus increasing their reactivity as acceptors for peptidyl transferase. This chain is Elongation factor P, found in Frankia casuarinae (strain DSM 45818 / CECT 9043 / HFP020203 / CcI3).